A 352-amino-acid polypeptide reads, in one-letter code: Molybdenum import ATP-binding protein ModC (352 aa).

In terms of domain architecture, ABC transporter spans 1–229 (MLELNFSQTL…SVMNPWLPKE (229 aa)). 31–38 (GVSGAGKT) is an ATP binding site. One can recognise a Mop domain in the interval 289–352 (QTSIRNVLRA…AQIKSVSITA (64 aa)).

Belongs to the ABC transporter superfamily. Molybdate importer (TC 3.A.1.8) family. As to quaternary structure, the complex is composed of two ATP-binding proteins (ModC), two transmembrane proteins (ModB) and a solute-binding protein (ModA).

Its subcellular location is the cell inner membrane. It catalyses the reaction molybdate(out) + ATP + H2O = molybdate(in) + ADP + phosphate + H(+). Part of the ABC transporter complex ModABC involved in molybdenum import. Responsible for energy coupling to the transport system. This is Molybdenum import ATP-binding protein ModC from Escherichia coli O6:H1 (strain CFT073 / ATCC 700928 / UPEC).